Consider the following 290-residue polypeptide: Shikimate dehydrogenase (NADP(+)) (290 aa).

Residues 20–22 and Thr-67 each bind shikimate; that span reads SLS. Lys-71 serves as the catalytic Proton acceptor. 2 residues coordinate shikimate: Asn-92 and Asp-107. Residues 132–136 and Met-228 contribute to the NADP(+) site; that span reads GAGGA. Tyr-230 is a shikimate binding site. An NADP(+)-binding site is contributed by Gly-251.

Belongs to the shikimate dehydrogenase family. In terms of assembly, homodimer.

The catalysed reaction is shikimate + NADP(+) = 3-dehydroshikimate + NADPH + H(+). The protein operates within metabolic intermediate biosynthesis; chorismate biosynthesis; chorismate from D-erythrose 4-phosphate and phosphoenolpyruvate: step 4/7. Involved in the biosynthesis of the chorismate, which leads to the biosynthesis of aromatic amino acids. Catalyzes the reversible NADPH linked reduction of 3-dehydroshikimate (DHSA) to yield shikimate (SA). The polypeptide is Shikimate dehydrogenase (NADP(+)) (Citrifermentans bemidjiense (strain ATCC BAA-1014 / DSM 16622 / JCM 12645 / Bem) (Geobacter bemidjiensis)).